The following is a 386-amino-acid chain: Succinate--CoA ligase [ADP-forming] subunit beta (386 aa).

In terms of domain architecture, ATP-grasp spans K9 to E244. Residues K46, G53–G55, E99, S102, and E107 contribute to the ATP site. Mg(2+) is bound by residues N199 and D213. Substrate is bound by residues N264 and G321 to M323.

It belongs to the succinate/malate CoA ligase beta subunit family. In terms of assembly, heterotetramer of two alpha and two beta subunits. It depends on Mg(2+) as a cofactor.

The enzyme catalyses succinate + ATP + CoA = succinyl-CoA + ADP + phosphate. It carries out the reaction GTP + succinate + CoA = succinyl-CoA + GDP + phosphate. The protein operates within carbohydrate metabolism; tricarboxylic acid cycle; succinate from succinyl-CoA (ligase route): step 1/1. Succinyl-CoA synthetase functions in the citric acid cycle (TCA), coupling the hydrolysis of succinyl-CoA to the synthesis of either ATP or GTP and thus represents the only step of substrate-level phosphorylation in the TCA. The beta subunit provides nucleotide specificity of the enzyme and binds the substrate succinate, while the binding sites for coenzyme A and phosphate are found in the alpha subunit. The sequence is that of Succinate--CoA ligase [ADP-forming] subunit beta from Wolbachia sp. subsp. Brugia malayi (strain TRS).